Consider the following 256-residue polypeptide: Thiazole synthase (256 aa).

The active-site Schiff-base intermediate with DXP is Lys-95. 1-deoxy-D-xylulose 5-phosphate-binding positions include Gly-156, Ala-183–Gly-184, and Asn-205–Thr-206.

This sequence belongs to the ThiG family. As to quaternary structure, homotetramer. Forms heterodimers with either ThiH or ThiS.

Its subcellular location is the cytoplasm. The enzyme catalyses [ThiS sulfur-carrier protein]-C-terminal-Gly-aminoethanethioate + 2-iminoacetate + 1-deoxy-D-xylulose 5-phosphate = [ThiS sulfur-carrier protein]-C-terminal Gly-Gly + 2-[(2R,5Z)-2-carboxy-4-methylthiazol-5(2H)-ylidene]ethyl phosphate + 2 H2O + H(+). The protein operates within cofactor biosynthesis; thiamine diphosphate biosynthesis. Its function is as follows. Catalyzes the rearrangement of 1-deoxy-D-xylulose 5-phosphate (DXP) to produce the thiazole phosphate moiety of thiamine. Sulfur is provided by the thiocarboxylate moiety of the carrier protein ThiS. In vitro, sulfur can be provided by H(2)S. This is Thiazole synthase from Gluconacetobacter diazotrophicus (strain ATCC 49037 / DSM 5601 / CCUG 37298 / CIP 103539 / LMG 7603 / PAl5).